We begin with the raw amino-acid sequence, 173 residues long: uncharacterized protein (173 aa).

The interval 1 to 23 is disordered; it reads ELTSVAGSGRVDSTPLGSRGVTD.

In terms of tissue distribution, component of the acid-insoluble and acid-soluble organic matrix of calcified layers of the shell (at protein level).

The protein resides in the secreted. This is an uncharacterized protein from Lottia gigantea (Giant owl limpet).